A 32-amino-acid polypeptide reads, in one-letter code: Seminal plasma protein PDC-109 (32 aa).

Residues 1–32 (DQDEGVSTEPTQVGPAELHNDETCVGPLVYRN) form a disordered region. An O-linked (GalNAc...) threonine glycan is attached at T11. Positions 19-32 (HNDETCVGPLVYRN) constitute a Fibronectin type-II domain.

The protein belongs to the seminal plasma protein family. Homodimer.

The protein localises to the secreted. Its function is as follows. Could enhance the fertilizing capacity of bull spermatozoa upon interaction with heparin-like glycosaminoglycans present in the female genital tract. Exhibits both simulatory and inhibitory actions on the release of pituitary gonadotropins. Binds to heparin and gelatin. In Bos indicus (Zebu), this protein is Seminal plasma protein PDC-109.